The primary structure comprises 317 residues: Transaldolase (317 aa).

Lys-132 functions as the Schiff-base intermediate with substrate in the catalytic mechanism.

The protein belongs to the transaldolase family. Type 1 subfamily. In terms of assembly, homodimer.

The protein localises to the cytoplasm. It catalyses the reaction D-sedoheptulose 7-phosphate + D-glyceraldehyde 3-phosphate = D-erythrose 4-phosphate + beta-D-fructose 6-phosphate. The protein operates within carbohydrate degradation; pentose phosphate pathway; D-glyceraldehyde 3-phosphate and beta-D-fructose 6-phosphate from D-ribose 5-phosphate and D-xylulose 5-phosphate (non-oxidative stage): step 2/3. Its function is as follows. Transaldolase is important for the balance of metabolites in the pentose-phosphate pathway. The chain is Transaldolase from Shewanella denitrificans (strain OS217 / ATCC BAA-1090 / DSM 15013).